The chain runs to 187 residues: Ribosome-recycling factor (187 aa).

It belongs to the RRF family.

The protein localises to the cytoplasm. In terms of biological role, responsible for the release of ribosomes from messenger RNA at the termination of protein biosynthesis. May increase the efficiency of translation by recycling ribosomes from one round of translation to another. In Nitrobacter winogradskyi (strain ATCC 25391 / DSM 10237 / CIP 104748 / NCIMB 11846 / Nb-255), this protein is Ribosome-recycling factor.